Consider the following 577-residue polypeptide: Arginine--tRNA ligase (577 aa).

The short motif at 122 to 132 (PNVAKEMHVGH) is the 'HIGH' region element.

This sequence belongs to the class-I aminoacyl-tRNA synthetase family. Monomer.

It is found in the cytoplasm. The catalysed reaction is tRNA(Arg) + L-arginine + ATP = L-arginyl-tRNA(Arg) + AMP + diphosphate. The sequence is that of Arginine--tRNA ligase from Shigella dysenteriae serotype 1 (strain Sd197).